We begin with the raw amino-acid sequence, 421 residues long: Alpha-1-antitrypsin (421 aa).

The signal sequence occupies residues 1 to 24; the sequence is MASSSTWGLLLLAGLCCLVPISLA. N-linked (GlcNAc...) asparagine glycans are attached at residues asparagine 73 and asparagine 110. An RCL region spans residues 376–395; the sequence is GATILEAIPMSIPPNVKFNK. Phosphoserine is present on serine 386.

This sequence belongs to the serpin family. In terms of assembly, interacts with CELA2A. Interacts with ERGIC3 and LMAN1/ERGIC53. Interacts with PRSS1/Trypsin.

It localises to the secreted. Its function is as follows. Inhibitor of serine proteases. Its primary target is elastase, but it also has a moderate affinity for plasmin and thrombin. This is Alpha-1-antitrypsin (SERPINA1) from Sus scrofa (Pig).